A 283-amino-acid chain; its full sequence is MQLFDELKTISKKHIKANKKAGEKVPSGLWISCPKCQQSIYHKDLGKYKTCPNCYYGFRIHARERLEWLVDTFQEFDTDLETKDPLNFPGYKEKLIKAQQDSKLNDSVLTGIAMIDDVEFALGIMDPYFIMGSMGTVTGEKITRLFERATQKNLPVILFTASGGARMQEGISSLMQMSKISQAVKEHSNAGLLYITVITDPTTGGVTASFAMQGDIILSEPRALLGFAGKRVIEQTIHQKVPDDLQDAETVLKNGFIDNIIKREDQKEKLAWLVKIHSMKGAF.

In terms of domain architecture, CoA carboxyltransferase N-terminal spans 29-283 (LWISCPKCQQ…VKIHSMKGAF (255 aa)). Residues Cys33, Cys36, Cys51, and Cys54 each coordinate Zn(2+). Residues 33-54 (CPKCQQSIYHKDLGKYKTCPNC) form a C4-type zinc finger.

The protein belongs to the AccD/PCCB family. Acetyl-CoA carboxylase is a heterohexamer composed of biotin carboxyl carrier protein (AccB), biotin carboxylase (AccC) and two subunits each of ACCase subunit alpha (AccA) and ACCase subunit beta (AccD). Zn(2+) serves as cofactor.

It is found in the cytoplasm. The catalysed reaction is N(6)-carboxybiotinyl-L-lysyl-[protein] + acetyl-CoA = N(6)-biotinyl-L-lysyl-[protein] + malonyl-CoA. It functions in the pathway lipid metabolism; malonyl-CoA biosynthesis; malonyl-CoA from acetyl-CoA: step 1/1. In terms of biological role, component of the acetyl coenzyme A carboxylase (ACC) complex. Biotin carboxylase (BC) catalyzes the carboxylation of biotin on its carrier protein (BCCP) and then the CO(2) group is transferred by the transcarboxylase to acetyl-CoA to form malonyl-CoA. This is Acetyl-coenzyme A carboxylase carboxyl transferase subunit beta from Ligilactobacillus salivarius (strain UCC118) (Lactobacillus salivarius).